The sequence spans 778 residues: Transcription factor kayak (778 aa).

Low complexity-rich tracts occupy residues 24–54 (AQQLQHQQQQQQQQQQQTQLQQTPHAAHTQQ) and 77–98 (QYYQQQQQQQQQEQQMLRQRQL). 6 disordered regions span residues 24–57 (AQQLQHQQQQQQQQQQQTQLQQTPHAAHTQQNGL), 76–130 (NQYY…HQLR), 183–223 (QPTA…TTNG), 294–320 (APLVNNNNNNNGNGNGNGNGNGNVLAS), 356–414 (ASVM…GTGG), and 427–478 (RNTN…RKRR). Residues 99–108 (PTQQPAASYE) show a composition bias toward polar residues. Low complexity-rich tracts occupy residues 109 to 130 (QQQQQPQQHQHLQQQQQQHQLR) and 183 to 222 (QPTAAVATTTPTQKATPTKTTPTNNPTTTTNNSTTTTTTN). The segment covering 382 to 402 (ISDTSSGATDSTSYQNGHMMG) has biased composition (low complexity). Over residues 403–414 (NSGGGNGGGTGG) the composition is skewed to gly residues. Positions 427-436 (RNTNTSNSAT) are enriched in polar residues. In terms of domain architecture, bZIP spans 457–520 (EEKRRIRRER…NQLEYFLQAH (64 aa)). The tract at residues 459-478 (KRRIRRERNKQAAARCRKRR) is basic motif. The segment at 485-513 (LTEEVELLEKRGENLKKEMELLNETKNQL) is leucine-zipper. Residues 550 to 571 (GSCGSGSSHHNNNSNSNDSSSG) show a composition bias toward low complexity. Disordered regions lie at residues 550-594 (GSCG…DLKP) and 756-778 (TSQNKHPLELPTPTTEPSKLVSL). Over residues 579–589 (TLNSTGRSNSP) the composition is skewed to polar residues. Position 588 is a phosphoserine (S588).

Belongs to the bZIP family. Fos subfamily. In terms of assembly, homodimer. Heterodimer with Jra. The kay-Jra heterodimer binds more stably to the AP-1 site than either of the two proteins alone.

The protein resides in the nucleus. In terms of biological role, developmentally regulated transcription factor AP-1 binds and recognizes the enhancer DNA sequence: 5'-TGA[CG]TCA-3'. May play a role in the function or determination of a particular subset of cells in the developing embryo. It is able to carry out its function either independently of or in conjunction with Jra. This is Transcription factor kayak from Drosophila pseudoobscura pseudoobscura (Fruit fly).